The following is a 339-amino-acid chain: MNTRFLDACWGKPVDRTPVWLMRQAGRYLPDYMRVRSKCTFLELCKTPELAAEVTIQPVDILGVDAAILFSDILTPVEPMGMALDFVPGPVFEHPIRTMADVEKLRIPQMEQDVPYVLETIKILRRELANKVPLIGFGGAPFTLACYMVEGKGSKDWATIKRMMYAAPEVYAALMEKVTMMDMEYLNAQIKAGAQAIQIFDTWGGVLSPSDYEKFVLPYTTKLINGLNRQNVPVIHFVKGAGTMLDTVKKAGGDVMGLDWHTNLGKARDILGSMAVQGNLDPTVLFAPNDVIEKEVKRVLDENGGRSGHIFNLGHGILPTVPPENAIHMVECVHRLSQQ.

Substrate is bound by residues 23–27 (RQAGR), Asp72, Tyr147, Thr202, and His315.

Belongs to the uroporphyrinogen decarboxylase family. In terms of assembly, homodimer.

Its subcellular location is the cytoplasm. The enzyme catalyses uroporphyrinogen III + 4 H(+) = coproporphyrinogen III + 4 CO2. The protein operates within porphyrin-containing compound metabolism; protoporphyrin-IX biosynthesis; coproporphyrinogen-III from 5-aminolevulinate: step 4/4. Its function is as follows. Catalyzes the decarboxylation of four acetate groups of uroporphyrinogen-III to yield coproporphyrinogen-III. The protein is Uroporphyrinogen decarboxylase of Geotalea daltonii (strain DSM 22248 / JCM 15807 / FRC-32) (Geobacter daltonii).